We begin with the raw amino-acid sequence, 245 residues long: Purine nucleoside phosphorylase (245 aa).

An a purine D-ribonucleoside-binding site is contributed by His-7. Residues 23 to 27, Arg-45, and 88 to 91 contribute to the phosphate site; these read GDPGR and RAGS. 183–184 is a binding site for a purine D-ribonucleoside; it reads ME. Asp-206 serves as the catalytic Proton donor.

The protein belongs to the PNP/MTAP phosphorylase family. As to quaternary structure, homohexamer; trimer of homodimers.

The enzyme catalyses inosine + phosphate = alpha-D-ribose 1-phosphate + hypoxanthine. It catalyses the reaction guanosine + phosphate = alpha-D-ribose 1-phosphate + guanine. The catalysed reaction is 2'-deoxyguanosine + phosphate = 2-deoxy-alpha-D-ribose 1-phosphate + guanine. It carries out the reaction 2'-deoxyinosine + phosphate = 2-deoxy-alpha-D-ribose 1-phosphate + hypoxanthine. The enzyme catalyses S-methyl-5'-thioinosine + phosphate = 5-(methylsulfanyl)-alpha-D-ribose 1-phosphate + hypoxanthine. It participates in purine metabolism; purine nucleoside salvage. With respect to regulation, inhibited by Immucillin-H and 5'-methylthio-Immucillin-H. Inhibited by 5'-deaza-1'-aza-2c-deoxy-1'-(9-methylene)-Immucilin-G (DADMe-ImmG). In terms of biological role, as part of the purine salvage pathway, catalyzes the phosphorolytic breakdown of the N-glycosidic bond in the beta-(deoxy)ribonucleoside molecules, with the formation of the corresponding free purine bases and pentose-1-phosphate. Preferentially acts on inosine and guanosine, and to a lesser extent on 2'-deoxyguanosine and guanosine. Also catalyzes the phosphorylation of S-methyl-5'-thioinosine (MTI) to hypoxanthine; MTI is produced by adenosine deaminase (ADA)-mediated breakdown of S-methyl-5'-thioadenosine (MTA), a major by-product of polyamine biosynthesis. Generates hypoxanthine from both the purine salvage pathway and from polyamine metabolism which is required for nucleic acids synthesis. Has no activity towards adenosine. This Plasmodium falciparum (isolate 3D7) protein is Purine nucleoside phosphorylase.